The chain runs to 336 residues: Glyoxylate reductase (336 aa).

Residues 158 to 161 (FGRI), 180 to 182 (SRT), and 239 to 241 (IAR) each bind NADP(+). Active-site residues include R241 and E270. H288 serves as the catalytic Proton donor. 288-290 (HIG) contacts NADP(+).

Belongs to the D-isomer specific 2-hydroxyacid dehydrogenase family. GyaR subfamily. In terms of assembly, homodimer.

It localises to the cytoplasm. It catalyses the reaction glycolate + NAD(+) = glyoxylate + NADH + H(+). In Pyrococcus furiosus (strain ATCC 43587 / DSM 3638 / JCM 8422 / Vc1), this protein is Glyoxylate reductase.